A 213-amino-acid chain; its full sequence is Glutamine amidotransferase-like class 1 domain-containing protein 1 (213 aa).

Residues 1 to 20 (MTSKPTCLIVASAASAGVSA) form the signal peptide.

The protein belongs to the peptidase C56 family. Homotetramer. Component of the FERRY complex.

Its subcellular location is the secreted. It localises to the early endosome. Component of the FERRY complex (Five-subunit Endosomal Rab5 and RNA/ribosome intermediary). The FERRY complex directly interacts with mRNAs and RAB5A, and functions as a RAB5A effector involved in the localization and the distribution of specific mRNAs most likely by mediating their endosomal transport. The complex recruits mRNAs and ribosomes to early endosomes through direct mRNA-interaction. The chain is Glutamine amidotransferase-like class 1 domain-containing protein 1 from Danio rerio (Zebrafish).